The primary structure comprises 366 residues: Class I histocompatibility antigen, Gogo-C*0201 alpha chain (366 aa).

The N-terminal stretch at 1-24 (MRVMAPRTLILPLSGALALTETWA) is a signal peptide. The tract at residues 25 to 114 (GSHSMRYFYT…LRGYYNQSED (90 aa)) is alpha-1. Over 25–308 (GSHSMRYFYT…EPSSQPTIPI (284 aa)) the chain is Extracellular. Residue N110 is glycosylated (N-linked (GlcNAc...) asparagine). The segment at 115–206 (GSHTLQSMYG…ENGKETLQRA (92 aa)) is alpha-2. Cystine bridges form between C125–C188 and C227–C283. The alpha-3 stretch occupies residues 207–298 (EPPKTHVTHH…GLPEPLTLRW (92 aa)). The Ig-like C1-type domain maps to 209–297 (PKTHVTHHPL…EGLPEPLTLR (89 aa)). The interval 299–308 (EPSSQPTIPI) is connecting peptide. A helical membrane pass occupies residues 309–333 (VGIVVGLAVLVVLAVLGAVVTAMMC). Residues 334–366 (RRKSSGGKGGSCSQAACSNSAQGSDESLITCKA) are Cytoplasmic-facing.

It belongs to the MHC class I family. Heterodimer of an alpha chain and a beta chain (beta-2-microglobulin).

It is found in the membrane. Functionally, involved in the presentation of foreign antigens to the immune system. This chain is Class I histocompatibility antigen, Gogo-C*0201 alpha chain, found in Gorilla gorilla gorilla (Western lowland gorilla).